An 87-amino-acid chain; its full sequence is MANIKSAKKRAVTSEKRRKHNASRRSMMRTFIKKVYAAIATGDKAAAQNAFNEMQPLVDRQAAKGLIHKNKAARHKANLTAQISKMA.

The disordered stretch occupies residues 1–27; the sequence is MANIKSAKKRAVTSEKRRKHNASRRSM.

It belongs to the bacterial ribosomal protein bS20 family.

In terms of biological role, binds directly to 16S ribosomal RNA. The chain is Small ribosomal subunit protein bS20 from Erwinia tasmaniensis (strain DSM 17950 / CFBP 7177 / CIP 109463 / NCPPB 4357 / Et1/99).